The sequence spans 107 residues: Replication restart protein PriB (107 aa).

Residues 8–107 (IENRLSLIGV…LHAEHIELLD (100 aa)) enclose the SSB domain.

It belongs to the PriB family. Homodimer. Interacts with PriA and DnaT. Component of the replication restart primosome. Primosome assembly occurs via a 'hand-off' mechanism. PriA binds to replication forks, subsequently PriB then DnaT bind; DnaT then displaces ssDNA to generate the helicase loading substrate.

Involved in the restart of stalled replication forks, which reloads the replicative helicase on sites other than the origin of replication; the PriA-PriB pathway is the major replication restart pathway. During primosome assembly it facilitates complex formation between PriA and DnaT on DNA; stabilizes PriA on DNA. Stimulates the DNA unwinding activity of PriA helicase. In Actinobacillus succinogenes (strain ATCC 55618 / DSM 22257 / CCUG 43843 / 130Z), this protein is Replication restart protein PriB.